The sequence spans 244 residues: Ribonuclease 3 (244 aa).

The RNase III domain occupies 17 to 146; that stretch reads FEKKMQELNL…FVGALYLDQG (130 aa). Position 59 (E59) interacts with Mg(2+). The active site involves D63. Positions 132 and 135 each coordinate Mg(2+). E135 is an active-site residue. In terms of domain architecture, DRBM spans 172–241; the sequence is DFKTQFQEYV…AERAYKILKN (70 aa).

This sequence belongs to the ribonuclease III family. As to quaternary structure, homodimer. It depends on Mg(2+) as a cofactor.

It localises to the cytoplasm. The catalysed reaction is Endonucleolytic cleavage to 5'-phosphomonoester.. Functionally, digests double-stranded RNA. Involved in the processing of primary rRNA transcript to yield the immediate precursors to the large and small rRNAs (23S and 16S). Processes some mRNAs, and tRNAs when they are encoded in the rRNA operon. Processes pre-crRNA and tracrRNA of type II CRISPR loci if present in the organism. The protein is Ribonuclease 3 of Staphylococcus saprophyticus subsp. saprophyticus (strain ATCC 15305 / DSM 20229 / NCIMB 8711 / NCTC 7292 / S-41).